Consider the following 444-residue polypeptide: Tubulin beta-4 chain (444 aa).

Residues Gln-11, Glu-69, Ser-138, Gly-142, Thr-143, Gly-144, Asn-204, and Asn-226 each coordinate GTP. Glu-69 serves as a coordination point for Mg(2+).

It belongs to the tubulin family. As to quaternary structure, dimer of alpha and beta chains. A typical microtubule is a hollow water-filled tube with an outer diameter of 25 nm and an inner diameter of 15 nM. Alpha-beta heterodimers associate head-to-tail to form protofilaments running lengthwise along the microtubule wall with the beta-tubulin subunit facing the microtubule plus end conferring a structural polarity. Microtubules usually have 13 protofilaments but different protofilament numbers can be found in some organisms and specialized cells. Mg(2+) serves as cofactor.

Its subcellular location is the cytoplasm. The protein localises to the cytoskeleton. Its function is as follows. Tubulin is the major constituent of microtubules, a cylinder consisting of laterally associated linear protofilaments composed of alpha- and beta-tubulin heterodimers. Microtubules grow by the addition of GTP-tubulin dimers to the microtubule end, where a stabilizing cap forms. Below the cap, tubulin dimers are in GDP-bound state, owing to GTPase activity of alpha-tubulin. The protein is Tubulin beta-4 chain (TUBB4) of Arabidopsis thaliana (Mouse-ear cress).